Here is a 222-residue protein sequence, read N- to C-terminus: Peptide methionine sulfoxide reductase MsrA (222 aa).

Residue Cys-60 is part of the active site.

This sequence belongs to the MsrA Met sulfoxide reductase family.

The enzyme catalyses L-methionyl-[protein] + [thioredoxin]-disulfide + H2O = L-methionyl-(S)-S-oxide-[protein] + [thioredoxin]-dithiol. It carries out the reaction [thioredoxin]-disulfide + L-methionine + H2O = L-methionine (S)-S-oxide + [thioredoxin]-dithiol. Has an important function as a repair enzyme for proteins that have been inactivated by oxidation. Catalyzes the reversible oxidation-reduction of methionine sulfoxide in proteins to methionine. This chain is Peptide methionine sulfoxide reductase MsrA, found in Pseudomonas putida (strain ATCC 47054 / DSM 6125 / CFBP 8728 / NCIMB 11950 / KT2440).